The primary structure comprises 170 residues: Putative 4-hydroxy-4-methyl-2-oxoglutarate aldolase (170 aa).

Substrate contacts are provided by residues 81 to 84 (GDII) and Arg103. Asp104 contacts a divalent metal cation.

The protein belongs to the class II aldolase/RraA-like family. In terms of assembly, homotrimer. It depends on a divalent metal cation as a cofactor.

It catalyses the reaction 4-hydroxy-4-methyl-2-oxoglutarate = 2 pyruvate. The enzyme catalyses oxaloacetate + H(+) = pyruvate + CO2. Functionally, catalyzes the aldol cleavage of 4-hydroxy-4-methyl-2-oxoglutarate (HMG) into 2 molecules of pyruvate. Also contains a secondary oxaloacetate (OAA) decarboxylase activity due to the common pyruvate enolate transition state formed following C-C bond cleavage in the retro-aldol and decarboxylation reactions. In Corynebacterium efficiens (strain DSM 44549 / YS-314 / AJ 12310 / JCM 11189 / NBRC 100395), this protein is Putative 4-hydroxy-4-methyl-2-oxoglutarate aldolase.